A 283-amino-acid chain; its full sequence is Protein/nucleic acid deglycase HchA (283 aa).

Zn(2+) is bound by residues His86, Glu91, and His123. Cys185 (nucleophile) is an active-site residue.

This sequence belongs to the peptidase C56 family. HchA subfamily. Homodimer.

It is found in the cytoplasm. The catalysed reaction is N(omega)-(1-hydroxy-2-oxopropyl)-L-arginyl-[protein] + H2O = lactate + L-arginyl-[protein] + H(+). The enzyme catalyses N(6)-(1-hydroxy-2-oxopropyl)-L-lysyl-[protein] + H2O = lactate + L-lysyl-[protein] + H(+). It carries out the reaction S-(1-hydroxy-2-oxopropyl)-L-cysteinyl-[protein] + H2O = lactate + L-cysteinyl-[protein] + H(+). It catalyses the reaction N(omega)-(1-hydroxy-2-oxoethyl)-L-arginyl-[protein] + H2O = L-arginyl-[protein] + glycolate + H(+). The catalysed reaction is N(6)-(1-hydroxy-2-oxoethyl)-L-lysyl-[protein] + H2O = glycolate + L-lysyl-[protein] + H(+). The enzyme catalyses S-(1-hydroxy-2-oxoethyl)-L-cysteinyl-[protein] + H2O = glycolate + L-cysteinyl-[protein] + H(+). It carries out the reaction N(2)-(1-hydroxy-2-oxopropyl)-dGTP + H2O = lactate + dGTP + H(+). It catalyses the reaction N(2)-(1-hydroxy-2-oxopropyl)-GTP + H2O = lactate + GTP + H(+). The catalysed reaction is N(2)-(1-hydroxy-2-oxopropyl)-GDP + H2O = lactate + GDP + H(+). The enzyme catalyses N(2)-(1-hydroxy-2-oxopropyl)-GMP + H2O = lactate + GMP + H(+). It carries out the reaction N(2)-(1-hydroxy-2-oxoethyl)-dGTP + H2O = dGTP + glycolate + H(+). It catalyses the reaction N(2)-(1-hydroxy-2-oxoethyl)-GTP + H2O = glycolate + GTP + H(+). The catalysed reaction is N(2)-(1-hydroxy-2-oxoethyl)-GDP + H2O = glycolate + GDP + H(+). The enzyme catalyses N(2)-(1-hydroxy-2-oxoethyl)-GMP + H2O = glycolate + GMP + H(+). It carries out the reaction an N(2)-(1-hydroxy-2-oxopropyl)-guanosine in RNA + H2O = a guanosine in RNA + lactate + H(+). It catalyses the reaction an N(2)-(1-hydroxy-2-oxopropyl)-2'-deoxyguanosine in DNA + H2O = a 2'-deoxyguanosine in DNA + lactate + H(+). The catalysed reaction is an N(2)-(1-hydroxy-2-oxoethyl)-guanosine in RNA + H2O = a guanosine in RNA + glycolate + H(+). The enzyme catalyses an N(2)-(1-hydroxy-2-oxoethyl)-2'-deoxyguanosine in DNA + H2O = a 2'-deoxyguanosine in DNA + glycolate + H(+). Functionally, protein and nucleotide deglycase that catalyzes the deglycation of the Maillard adducts formed between amino groups of proteins or nucleotides and reactive carbonyl groups of glyoxals. Thus, functions as a protein deglycase that repairs methylglyoxal- and glyoxal-glycated proteins, and releases repaired proteins and lactate or glycolate, respectively. Deglycates cysteine, arginine and lysine residues in proteins, and thus reactivates these proteins by reversing glycation by glyoxals. Acts on early glycation intermediates (hemithioacetals and aminocarbinols), preventing the formation of Schiff bases and advanced glycation endproducts (AGE). Also functions as a nucleotide deglycase able to repair glycated guanine in the free nucleotide pool (GTP, GDP, GMP, dGTP) and in DNA and RNA. Is thus involved in a major nucleotide repair system named guanine glycation repair (GG repair), dedicated to reversing methylglyoxal and glyoxal damage via nucleotide sanitization and direct nucleic acid repair. Plays an important role in protecting cells from carbonyl stress. The chain is Protein/nucleic acid deglycase HchA from Escherichia coli (strain K12 / MC4100 / BW2952).